The primary structure comprises 1420 residues: Vacuolar protein sorting/targeting protein 10 (1420 aa).

The first 21 residues, 1-21 (MILRRLLLAGSLLLATAFTSA), serve as a signal peptide directing secretion. Topologically, residues 22–1284 (KKADGPKISV…FFKKHPRLRG (1263 aa)) are lumenal. A BNR 1 repeat occupies 61–71 (YVSRDAGANWD). N-linked (GlcNAc...) asparagine glycosylation is found at Asn-271 and Asn-321. BNR repeat units follow at residues 377–386 (ISFDDGRTFQ) and 644–654 (FLSRDHGKKWK). An N-linked (GlcNAc...) asparagine glycan is attached at Asn-893. 2 BNR repeats span residues 1028–1038 (FITRDAGITWE) and 1070–1079 (YSLDEGRSWK). Residues 1285–1305 (IGLFFVILIPICLAATAGYYV) form a helical membrane-spanning segment. Topologically, residues 1306-1331 (YNHWDGKFGRIRLGETGSGGLFDRDS) are cytoplasmic. The chain crosses the membrane as a helical span at residues 1332–1352 (LLVSIPVSMVAGVVAVITALP). The Lumenal segment spans residues 1353–1420 (LLVSSLWRSV…EEGDERNGQV (68 aa)). Acidic residues predominate over residues 1397–1414 (DEDELLGTDDFDDDEEGD). Residues 1397–1420 (DEDELLGTDDFDDDEEGDERNGQV) form a disordered region.

It belongs to the VPS10-related sortilin family.

The protein resides in the golgi apparatus. Its subcellular location is the trans-Golgi network membrane. It localises to the prevacuolar compartment membrane. Functions as a sorting receptor in the Golgi compartment required for the intracellular sorting and delivery of soluble vacuolar proteins, like carboxypeptidase Y (CPY) and proteinase A. Executes multiple rounds of sorting by cycling between the late Golgi and a prevacuolar endosome-like compartment. The sequence is that of Vacuolar protein sorting/targeting protein 10 (VPS10) from Ajellomyces capsulatus (strain H143) (Darling's disease fungus).